The following is a 482-amino-acid chain: ATP synthase subunit beta, chloroplastic (482 aa).

Residue 168–175 (GGAGVGKT) coordinates ATP.

It belongs to the ATPase alpha/beta chains family. As to quaternary structure, F-type ATPases have 2 components, CF(1) - the catalytic core - and CF(0) - the membrane proton channel. CF(1) has five subunits: alpha(3), beta(3), gamma(1), delta(1), epsilon(1). CF(0) has four main subunits: a(1), b(1), b'(1) and c(9-12).

It is found in the plastid. It localises to the chloroplast thylakoid membrane. The catalysed reaction is ATP + H2O + 4 H(+)(in) = ADP + phosphate + 5 H(+)(out). Functionally, produces ATP from ADP in the presence of a proton gradient across the membrane. The catalytic sites are hosted primarily by the beta subunits. The polypeptide is ATP synthase subunit beta, chloroplastic (Gnetum parvifolium (Small-leaved jointfir)).